The following is a 420-amino-acid chain: Putative kinase Y4mE (420 aa).

The active-site Proton acceptor is the aspartate 302.

Belongs to the HipA Ser/Thr kinase family.

The chain is Putative kinase Y4mE from Sinorhizobium fredii (strain NBRC 101917 / NGR234).